Consider the following 273-residue polypeptide: Undecaprenyl-diphosphatase (273 aa).

7 helical membrane passes run 6-26, 45-65, 90-110, 116-136, 190-210, 222-242, and 252-272; these read SLLI…LPVS, AKTF…VMFW, LTLI…LVFH, LFNP…LIAA, YAAS…ATVL, ADIP…LIAI, and ISFI…YVVF.

It belongs to the UppP family.

It is found in the cell inner membrane. It carries out the reaction di-trans,octa-cis-undecaprenyl diphosphate + H2O = di-trans,octa-cis-undecaprenyl phosphate + phosphate + H(+). In terms of biological role, catalyzes the dephosphorylation of undecaprenyl diphosphate (UPP). Confers resistance to bacitracin. The sequence is that of Undecaprenyl-diphosphatase from Salmonella paratyphi C (strain RKS4594).